The primary structure comprises 1316 residues: DNA-directed RNA polymerase subunit beta' (1316 aa).

Zn(2+) contacts are provided by Cys60, Cys62, Cys75, and Cys78. The disordered stretch occupies residues 183–209; the sequence is ELEEEGAKSDVRRKVRDGGEREMRQLR. Mg(2+) is bound by residues Asp535, Asp537, and Asp539. 4 residues coordinate Zn(2+): Cys890, Cys966, Cys973, and Cys976.

Belongs to the RNA polymerase beta' chain family. In terms of assembly, the RNAP catalytic core consists of 2 alpha, 1 beta, 1 beta' and 1 omega subunit. When a sigma factor is associated with the core the holoenzyme is formed, which can initiate transcription. Mg(2+) is required as a cofactor. It depends on Zn(2+) as a cofactor.

The catalysed reaction is RNA(n) + a ribonucleoside 5'-triphosphate = RNA(n+1) + diphosphate. Functionally, DNA-dependent RNA polymerase catalyzes the transcription of DNA into RNA using the four ribonucleoside triphosphates as substrates. This chain is DNA-directed RNA polymerase subunit beta', found in Mycolicibacterium gilvum (strain PYR-GCK) (Mycobacterium gilvum (strain PYR-GCK)).